A 553-amino-acid polypeptide reads, in one-letter code: Putative transport protein YidE (553 aa).

The next 5 membrane-spanning stretches (helical) occupy residues 4–24 (IALTVSILALVAVVGLFIGNV), 28–48 (GIGLGIGGVLFGGIIVGHFVS), 65–85 (FGLILFVYTIGIQVGPGFFAS), 95–115 (LFAVLIVIIGGLVTAILHKLF), and 158–178 (MSYAMAYPFGICGILFTMWML). RCK C-terminal domains lie at 191 to 276 (QQHE…VIGQ) and 279 to 361 (DTSL…VLGN). Transmembrane regions (helical) follow at residues 371–391 (MLPVFIGIGLGVLLGSIPVFV), 393–413 (GFPAALKLGLAGGPLIMALIL), 439–459 (IVLFLSVVGLKSGGDFVNTLV), 464–484 (LSWIGYGALITAVPLITVGIL), 493–513 (YLTMCGMLAGSMTDPPALAFA), and 533–553 (LVMFLRIITPQLLAVLFWSIG).

It belongs to the AAE transporter (TC 2.A.81) family. YidE subfamily.

Its subcellular location is the cell membrane. The polypeptide is Putative transport protein YidE (Escherichia coli (strain ATCC 8739 / DSM 1576 / NBRC 3972 / NCIMB 8545 / WDCM 00012 / Crooks)).